Here is a 579-residue protein sequence, read N- to C-terminus: Isocitrate dehydrogenase kinase/phosphatase (579 aa).

ATP is bound by residues 324 to 330 and K345; that span reads ADGTPGM. D380 is a catalytic residue.

It belongs to the AceK family.

The protein localises to the cytoplasm. It catalyses the reaction L-seryl-[isocitrate dehydrogenase] + ATP = O-phospho-L-seryl-[isocitrate dehydrogenase] + ADP + H(+). Its function is as follows. Bifunctional enzyme which can phosphorylate or dephosphorylate isocitrate dehydrogenase (IDH) on a specific serine residue. This is a regulatory mechanism which enables bacteria to bypass the Krebs cycle via the glyoxylate shunt in response to the source of carbon. When bacteria are grown on glucose, IDH is fully active and unphosphorylated, but when grown on acetate or ethanol, the activity of IDH declines drastically concomitant with its phosphorylation. This chain is Isocitrate dehydrogenase kinase/phosphatase, found in Xanthomonas campestris pv. campestris (strain 8004).